Consider the following 460-residue polypeptide: Argininosuccinate lyase (460 aa).

The protein belongs to the lyase 1 family. Argininosuccinate lyase subfamily.

It localises to the cytoplasm. It carries out the reaction 2-(N(omega)-L-arginino)succinate = fumarate + L-arginine. It participates in amino-acid biosynthesis; L-arginine biosynthesis; L-arginine from L-ornithine and carbamoyl phosphate: step 3/3. The chain is Argininosuccinate lyase from Parvibaculum lavamentivorans (strain DS-1 / DSM 13023 / NCIMB 13966).